The following is a 339-amino-acid chain: Probable geranylgeranyl transferase type-2 subunit beta (339 aa).

6 PFTB repeats span residues 24–65 (IDKH…YLLK), 72–113 (KNEV…IQYD), 120–161 (INSV…SLLK), 168–209 (CEKA…SILN), 216–257 (IDKL…SAID), and 264–306 (NDKL…SLMG). Residues 194-196 (HAG) and 236-248 (RPEK…YSWW) each bind geranylgeranyl diphosphate. Residues Asp242, Cys244, and His294 each coordinate Zn(2+).

This sequence belongs to the protein prenyltransferase subunit beta family. As to quaternary structure, heterodimer of an alpha and a beta subunit. Zn(2+) serves as cofactor.

The catalysed reaction is geranylgeranyl diphosphate + L-cysteinyl-[protein] = S-geranylgeranyl-L-cysteinyl-[protein] + diphosphate. Its function is as follows. Catalyzes the transfer of a geranyl-geranyl moiety from geranyl-geranyl pyrophosphate to both cysteines in Rab proteins with an -XXCC, -XCXC and -CCXX C-terminal. The sequence is that of Probable geranylgeranyl transferase type-2 subunit beta (rabggtb) from Dictyostelium discoideum (Social amoeba).